A 417-amino-acid chain; its full sequence is Methyltransferase/ribosomally synthesized cyclic peptide dendrothelin A precursor dbihMA (417 aa).

The segment at 1 to 251 (MESSTQTKPG…GVSTFYIPPK (251 aa)) is methyltransferase domain. Active-site residues include Arg-72, Tyr-76, and Tyr-98. Residues Tyr-98, His-100, Val-103, Ala-130, Gln-172, Ala-213, Ser-244, and Thr-245 each contribute to the S-adenosyl-L-methionine site. The segment at 252 to 378 (ARKDINTDII…WAIRCAMKNM (127 aa)) is clasp domain. The segment at 379–399 (PSSLLEAASQSVEEASMNGFP) is precursor leader. N-methylvaline occurs at positions 401 and 403. Position 404 is an N-methylthreonine (Thr-404). Gly-405 is subject to N-methylglycine. Position 406 is an N-methylisoleucine (Ile-406). Position 407 is an N-methylvaline (Val-407). Gly-408 is modified (N-methylglycine). Position 410 is an N-methylisoleucine (Ile-410). Gly-411 bears the N-methylglycine mark. Val-413 is modified (N-methylvaline).

This sequence in the N-terminal section; belongs to the precorrin methyltransferase family. In terms of assembly, homodimer. Post-translationally, dbiMA automethylates at Val-401, Val-403, Thr-404, Gly-405, Ile-406, Val-407, Gly-408, Ile-410, Gly-411 and Val-413 before being processed by the prolyloligopeptidase dbiP which likely forms a peptidyl ester upon removal of the follower propeptide, which then undergoes macrocyclization with the N-terminus of the modified core peptide. Peptide backbone alpha-N-methylations change the physicochemical properties of amide bonds to provide structural constraints and other favorable characteristics including biological membrane permeability to peptides.

Its pathway is mycotoxin biosynthesis. In terms of biological role, fusion protein of the methyltransferase dbiM and the dendrothelin core peptide; part of the gene cluster that mediates the biosynthesis of dendrothelin A, a highly methylated cyclic dodecapeptide showing slight nematodicidal activity. Dendrothelin A derives from the C-terminus of the dbiMA protein, and it is the dbiMA protein that methylates its own C-terminus using S-adenosyl methionine (SAM). The C-terminus is subsequently cleaved off and macrocyclized by the prolyloligopeptidase dbiP to give the final product. The sequence is that of Methyltransferase/ribosomally synthesized cyclic peptide dendrothelin A precursor dbihMA from Dendrothele bispora (strain CBS 962.96).